Reading from the N-terminus, the 188-residue chain is Probable DNA-directed RNA polymerase subunit delta (188 aa).

The 70-residue stretch at 14–83 (LSMIEVARAI…GENKWGLRSW (70 aa)) folds into the HTH HARE-type domain. Residues 119-188 (EDAIDYSADD…EDEEDEDEEE (70 aa)) are disordered.

Belongs to the RpoE family. As to quaternary structure, RNAP is composed of a core of 2 alpha, a beta and a beta' subunits. The core is associated with a delta subunit and one of several sigma factors.

Functionally, participates in both the initiation and recycling phases of transcription. In the presence of the delta subunit, RNAP displays an increased specificity of transcription, a decreased affinity for nucleic acids, and an increased efficiency of RNA synthesis because of enhanced recycling. This Streptococcus equi subsp. zooepidemicus (strain H70) protein is Probable DNA-directed RNA polymerase subunit delta.